The sequence spans 308 residues: MSSWTSKENINGVYIPSALLIFGTTIIKKEWIAYATALAVVLSAWKLFSNKPRKVLNPTEFQNFVLKDKTIVSHNVCIYRFALPRPTDILGLPIGQHISLAATIPGQSKEIVRSYTPISSDDDAGYFDLLVKSYPQGNISKHLTTLRIGDKMKVRGPKGAMVYTPNMVRHIGMIAGGTGITPMLQVIKAIIKGRPRNGGNDTTQIDLIFANVNPDDILLKEELDQLAKEDDAFRIYYVLNNPPEKWNGGVGFVTPDMIKAKLPAPAGDIKVLICGPPPMVSAMKKATESLGYKKANLVSKLEDQVFCF.

A helical membrane pass occupies residues 10–27; it reads INGVYIPSALLIFGTTII. Residues 59–164 form the FAD-binding FR-type domain; that stretch reads TEFQNFVLKD…RGPKGAMVYT (106 aa). Residues 144–159 and 170–207 each bind FAD; these read TTLR…GPKG and HIGM…QIDL.

Belongs to the flavoprotein pyridine nucleotide cytochrome reductase family. As to quaternary structure, monomer. Component of the 2-(3-amino-3-carboxypropyl)histidine synthase complex composed of DPH1, DPH2, DPH3 and a NADH-dependent reductase, predominantly CBR1. It depends on FAD as a cofactor.

It localises to the mitochondrion outer membrane. The catalysed reaction is 2 Fe(III)-[cytochrome b5] + NADH = 2 Fe(II)-[cytochrome b5] + NAD(+) + H(+). It carries out the reaction 2 Fe(3+)-[Dph3] + NADH = 2 Fe(2+)-[Dph3] + NAD(+) + H(+). Its pathway is protein modification; peptidyl-diphthamide biosynthesis. Its function is as follows. NADH-dependent reductase for DPH3 and cytochrome b5. Required for the first step of diphthamide biosynthesis, a post-translational modification of histidine which occurs in elongation factor 2. DPH1 and DPH2 transfer a 3-amino-3-carboxypropyl (ACP) group from S-adenosyl-L-methionine (SAM) to a histidine residue, the reaction is assisted by a reduction system comprising DPH3 and a NADH-dependent reductase, predominantly CBR1. By reducing DPH3, also involved in the formation of the tRNA wobble base modification mcm5s 2U (5-methoxycarbonylmethyl-2-thiouridine), mediated by the elongator complex. The cytochrome b5/NADH cytochrome b5 reductase electron transfer system supports the catalytic activity of several sterol biosynthetic enzymes. The polypeptide is NADH-cytochrome b5 reductase 1 (CBR1) (Coccidioides immitis (strain RS) (Valley fever fungus)).